A 192-amino-acid chain; its full sequence is NADH-quinone oxidoreductase subunit B (192 aa).

Positions 71, 72, 136, and 166 each coordinate [4Fe-4S] cluster.

This sequence belongs to the complex I 20 kDa subunit family. NDH-1 is composed of 14 different subunits. Subunits NuoB, C, D, E, F, and G constitute the peripheral sector of the complex. [4Fe-4S] cluster serves as cofactor.

Its subcellular location is the cell inner membrane. It catalyses the reaction a quinone + NADH + 5 H(+)(in) = a quinol + NAD(+) + 4 H(+)(out). Functionally, NDH-1 shuttles electrons from NADH, via FMN and iron-sulfur (Fe-S) centers, to quinones in the respiratory chain. Couples the redox reaction to proton translocation (for every two electrons transferred, four hydrogen ions are translocated across the cytoplasmic membrane), and thus conserves the redox energy in a proton gradient. The chain is NADH-quinone oxidoreductase subunit B from Azorhizobium caulinodans (strain ATCC 43989 / DSM 5975 / JCM 20966 / LMG 6465 / NBRC 14845 / NCIMB 13405 / ORS 571).